The chain runs to 1026 residues: Lon protease homolog, mitochondrial (1026 aa).

The transit peptide at M1–Y29 directs the protein to the mitochondrion. Disordered stretches follow at residues Y29–L55 and A185–S206. The Lon N-terminal domain maps to M62–L345. Acidic residues predominate over residues A185 to T194. The segment covering V195–S206 has biased composition (basic and acidic residues). Position 497–504 (G497–T504) interacts with ATP. Residues T711 to V785 form a disordered region. Residues L714 to D737 are compositionally biased toward polar residues. The Lon proteolytic domain maps to T815–G1001. Residues S907 and K950 contribute to the active site.

It belongs to the peptidase S16 family. As to quaternary structure, homohexamer or homoheptamer. Organized in a ring with a central cavity.

It is found in the mitochondrion matrix. It carries out the reaction Hydrolysis of proteins in presence of ATP.. ATP-dependent serine protease that mediates the selective degradation of misfolded, unassembled or oxidatively damaged polypeptides as well as certain short-lived regulatory proteins in the mitochondrial matrix. May also have a chaperone function in the assembly of inner membrane protein complexes. Participates in the regulation of mitochondrial gene expression and in the maintenance of the integrity of the mitochondrial genome. Binds to mitochondrial DNA in a site-specific manner. This chain is Lon protease homolog, mitochondrial, found in Candida glabrata (strain ATCC 2001 / BCRC 20586 / JCM 3761 / NBRC 0622 / NRRL Y-65 / CBS 138) (Yeast).